A 155-amino-acid polypeptide reads, in one-letter code: Protein FAM163B (155 aa).

The chain crosses the membrane as a helical span at residues 6-26 (VVITGGILATVILLCIIAVLC).

The protein belongs to the FAM163 family.

It localises to the membrane. The chain is Protein FAM163B (fam163b) from Xenopus tropicalis (Western clawed frog).